Reading from the N-terminus, the 273-residue chain is Large ribosomal subunit protein uL2 (273 aa).

2 disordered regions span residues 28–53 (KPFA…TTRH) and 221–273 (RGTA…RRSK). Residues 39 to 48 (KSGGRNNNGR) show a composition bias toward low complexity.

Belongs to the universal ribosomal protein uL2 family. As to quaternary structure, part of the 50S ribosomal subunit. Forms a bridge to the 30S subunit in the 70S ribosome.

In terms of biological role, one of the primary rRNA binding proteins. Required for association of the 30S and 50S subunits to form the 70S ribosome, for tRNA binding and peptide bond formation. It has been suggested to have peptidyltransferase activity; this is somewhat controversial. Makes several contacts with the 16S rRNA in the 70S ribosome. This is Large ribosomal subunit protein uL2 from Klebsiella pneumoniae (strain 342).